We begin with the raw amino-acid sequence, 364 residues long: Aminomethyltransferase (364 aa).

It belongs to the GcvT family. In terms of assembly, the glycine cleavage system is composed of four proteins: P, T, L and H.

The enzyme catalyses N(6)-[(R)-S(8)-aminomethyldihydrolipoyl]-L-lysyl-[protein] + (6S)-5,6,7,8-tetrahydrofolate = N(6)-[(R)-dihydrolipoyl]-L-lysyl-[protein] + (6R)-5,10-methylene-5,6,7,8-tetrahydrofolate + NH4(+). Functionally, the glycine cleavage system catalyzes the degradation of glycine. This chain is Aminomethyltransferase, found in Citrobacter koseri (strain ATCC BAA-895 / CDC 4225-83 / SGSC4696).